Reading from the N-terminus, the 592-residue chain is Potassium-transporting ATPase potassium-binding subunit (592 aa).

The next 13 membrane-spanning stretches (helical) occupy residues 6 to 26, 67 to 87, 136 to 156, 179 to 199, 283 to 303, 312 to 332, 359 to 379, 389 to 409, 411 to 431, 450 to 470, 489 to 511, 519 to 539, and 559 to 579; these read WLET…FGTY, ACAM…MLLL, GFAV…IAAI, LYIL…QGVI, LSNI…TYTF, QGWA…GVFY, FGLA…CGAV, IGGM…GGVG, GLYT…LMIG, ITTV…AMIL, LYAF…GNTL, VAML…AGGL, and FALW…FPAL.

It belongs to the KdpA family. The system is composed of three essential subunits: KdpA, KdpB and KdpC.

It is found in the cell inner membrane. Functionally, part of the high-affinity ATP-driven potassium transport (or Kdp) system, which catalyzes the hydrolysis of ATP coupled with the electrogenic transport of potassium into the cytoplasm. This subunit binds the periplasmic potassium ions and delivers the ions to the membrane domain of KdpB through an intramembrane tunnel. The sequence is that of Potassium-transporting ATPase potassium-binding subunit from Geotalea uraniireducens (strain Rf4) (Geobacter uraniireducens).